We begin with the raw amino-acid sequence, 348 residues long: Dihydroorotate dehydrogenase (quinone) (348 aa).

Residues 60–64 and Thr-84 contribute to the FMN site; that span reads AGFDK. Lys-64 is a substrate binding site. 109–113 provides a ligand contact to substrate; it reads NRLGF. The FMN site is built by Asn-138 and Asn-169. Residue Asn-169 participates in substrate binding. The active-site Nucleophile is the Ser-172. Asn-174 is a substrate binding site. FMN is bound by residues Lys-207 and Ser-235. 236-237 provides a ligand contact to substrate; sequence NT. Residues Gly-258, Gly-287, and 308–309 contribute to the FMN site; that span reads YS.

The protein belongs to the dihydroorotate dehydrogenase family. Type 2 subfamily. As to quaternary structure, monomer. The cofactor is FMN.

The protein resides in the cell membrane. It carries out the reaction (S)-dihydroorotate + a quinone = orotate + a quinol. It functions in the pathway pyrimidine metabolism; UMP biosynthesis via de novo pathway; orotate from (S)-dihydroorotate (quinone route): step 1/1. In terms of biological role, catalyzes the conversion of dihydroorotate to orotate with quinone as electron acceptor. In Parvibaculum lavamentivorans (strain DS-1 / DSM 13023 / NCIMB 13966), this protein is Dihydroorotate dehydrogenase (quinone).